A 251-amino-acid polypeptide reads, in one-letter code: Ubiquinone/menaquinone biosynthesis C-methyltransferase UbiE (251 aa).

S-adenosyl-L-methionine-binding positions include Thr-74, Asp-95, 123–124 (NA), and Ser-140.

This sequence belongs to the class I-like SAM-binding methyltransferase superfamily. MenG/UbiE family.

The catalysed reaction is a 2-demethylmenaquinol + S-adenosyl-L-methionine = a menaquinol + S-adenosyl-L-homocysteine + H(+). It catalyses the reaction a 2-methoxy-6-(all-trans-polyprenyl)benzene-1,4-diol + S-adenosyl-L-methionine = a 5-methoxy-2-methyl-3-(all-trans-polyprenyl)benzene-1,4-diol + S-adenosyl-L-homocysteine + H(+). It participates in quinol/quinone metabolism; menaquinone biosynthesis; menaquinol from 1,4-dihydroxy-2-naphthoate: step 2/2. Its pathway is cofactor biosynthesis; ubiquinone biosynthesis. Functionally, methyltransferase required for the conversion of demethylmenaquinol (DMKH2) to menaquinol (MKH2) and the conversion of 2-polyprenyl-6-methoxy-1,4-benzoquinol (DDMQH2) to 2-polyprenyl-3-methyl-6-methoxy-1,4-benzoquinol (DMQH2). This is Ubiquinone/menaquinone biosynthesis C-methyltransferase UbiE from Klebsiella pneumoniae subsp. pneumoniae (strain ATCC 700721 / MGH 78578).